A 187-amino-acid chain; its full sequence is Large ribosomal subunit protein uL10 (187 aa).

The protein belongs to the universal ribosomal protein uL10 family. Part of the ribosomal stalk of the 50S ribosomal subunit. The N-terminus interacts with L11 and the large rRNA to form the base of the stalk. The C-terminus forms an elongated spine to which L12 dimers bind in a sequential fashion forming a multimeric L10(L12)X complex.

Forms part of the ribosomal stalk, playing a central role in the interaction of the ribosome with GTP-bound translation factors. The protein is Large ribosomal subunit protein uL10 of Synechococcus sp. (strain JA-2-3B'a(2-13)) (Cyanobacteria bacterium Yellowstone B-Prime).